Consider the following 191-residue polypeptide: MSAVLIAVLALLALCLLGGAILGFAAVRFRVEGDPIAEQINALLPQTQCGQCGYPGCKPYAEAIAGGDKINKCPPGGEATIQALADLLDVEPEPLDAEGGEKPQMVAYIREAECIGCTKCIQACPVDAIVGAARQMHTVIISECTGCDLCVEPCPVDCIDMIEVGSNLQSWKWNRPLAPGQLIATDREQAA.

The segment at 1–26 (MSAVLIAVLALLALCLLGGAILGFAA) is hydrophobic. Positions 32–90 (EGDPIAEQINALLPQTQCGQCGYPGCKPYAEAIAGGDKINKCPPGGEATIQALADLLDV) constitute a 4Fe-4S domain. Positions 49, 52, 57, 73, 114, 117, 120, 124, 144, 147, 150, and 154 each coordinate [4Fe-4S] cluster. 4Fe-4S ferredoxin-type domains follow at residues 105-134 (MVAY…GAAR) and 135-164 (QMHT…MIEV).

The protein belongs to the 4Fe4S bacterial-type ferredoxin family. RnfB subfamily. The complex is composed of six subunits: RnfA, RnfB, RnfC, RnfD, RnfE and RnfG. It depends on [4Fe-4S] cluster as a cofactor.

Its subcellular location is the cell inner membrane. Its function is as follows. Part of a membrane-bound complex that couples electron transfer with translocation of ions across the membrane. The polypeptide is Ion-translocating oxidoreductase complex subunit B (Stutzerimonas stutzeri (strain A1501) (Pseudomonas stutzeri)).